A 261-amino-acid polypeptide reads, in one-letter code: DNA repair protein RecO (261 aa).

It belongs to the RecO family.

Its function is as follows. Involved in DNA repair and RecF pathway recombination. The polypeptide is DNA repair protein RecO (Mycobacteroides abscessus (strain ATCC 19977 / DSM 44196 / CCUG 20993 / CIP 104536 / JCM 13569 / NCTC 13031 / TMC 1543 / L948) (Mycobacterium abscessus)).